Here is a 184-residue protein sequence, read N- to C-terminus: Protein PLANT CADMIUM RESISTANCE 5 (184 aa).

A compositionally biased stretch (polar residues) spans 1 to 26 (MGRPVGQTNQAQPSVQHTASPSNKVS). The segment at 1-33 (MGRPVGQTNQAQPSVQHTASPSNKVSHNGGIGK) is disordered. A helical membrane pass occupies residues 94 to 114 (AGLLYGALFFTGASFVYSYMF).

It belongs to the cornifelin family.

Its subcellular location is the membrane. Its function is as follows. May be involved in heavy metals transport. The chain is Protein PLANT CADMIUM RESISTANCE 5 (PCR5) from Arabidopsis thaliana (Mouse-ear cress).